A 237-amino-acid polypeptide reads, in one-letter code: Probable GTP-binding protein EngB (237 aa).

One can recognise an EngB-type G domain in the interval 23–209 (AVPEVAFAGR…QAVIAGWLNL (187 aa)). Residues 31–38 (GRSNAGKS), 58–62 (GRTQH), 82–85 (DLPG), 149–152 (TKAD), and 187–190 (LFSS) contribute to the GTP site. The Mg(2+) site is built by serine 38 and threonine 60. The disordered stretch occupies residues 214–237 (KAEREPAAANSVPPAVPPASDPAA). Over residues 227-237 (PAVPPASDPAA) the composition is skewed to pro residues.

It belongs to the TRAFAC class TrmE-Era-EngA-EngB-Septin-like GTPase superfamily. EngB GTPase family. Requires Mg(2+) as cofactor.

Functionally, necessary for normal cell division and for the maintenance of normal septation. The chain is Probable GTP-binding protein EngB from Cupriavidus taiwanensis (strain DSM 17343 / BCRC 17206 / CCUG 44338 / CIP 107171 / LMG 19424 / R1) (Ralstonia taiwanensis (strain LMG 19424)).